Here is an 804-residue protein sequence, read N- to C-terminus: General transcription and DNA repair factor IIH helicase/translocase subunit XPB (804 aa).

Disordered stretches follow at residues Met-1–Glu-61 and Gln-220–Ser-255. The span at Pro-14–Asp-36 shows a compositional bias: acidic residues. 2 stretches are compositionally biased toward low complexity: residues Asn-47 to Asn-60 and Gln-220 to Pro-229. The segment covering Glu-236–Ser-255 has biased composition (basic and acidic residues). The Helicase ATP-binding domain occupies Met-335–Met-497. Leu-348–Thr-355 serves as a coordination point for ATP. The DEVH box motif lies at Asp-450–His-453. The Helicase C-terminal domain occupies Gln-551–Glu-705. Disordered regions lie at residues Asp-736–Ser-761 and Lys-782–Arg-804. Residues Leu-784–Ala-793 are compositionally biased toward basic and acidic residues. Residues Leu-794–Arg-804 show a composition bias toward basic residues.

Belongs to the helicase family. RAD25/XPB subfamily. Component of the 7-subunit TFIIH core complex composed of XPB/ptr8, XPD/rad15, ssl1, tfb1, tfb2, tfb4 and tfb5, which is active in NER. The core complex associates with the 3-subunit CTD-kinase module TFIIK composed of mcs2/cyclin H, mcs6/cdk7 and pmh1/tfb3 to form the 10-subunit holoenzyme (holo-TFIIH) active in transcription.

The protein resides in the nucleus. It catalyses the reaction Couples ATP hydrolysis with the unwinding of duplex DNA by translocating in the 3'-5' direction.. The enzyme catalyses ATP + H2O = ADP + phosphate + H(+). Probable ATP-dependent 3'-5' DNA helicase/translocase. Binds dsDNA rather than ssDNA, unzipping it in a translocase rather than classical helicase activity. Component of the general transcription and DNA repair factor IIH (TFIIH) core complex. When complexed to CDK-activating kinase (CAK), involved in RNA transcription by RNA polymerase II. Also involved in transcription-coupled nucleotide excision repair (NER) of damaged DNA. In NER, TFIIH acts by opening DNA around the lesion to allow the excision of the damaged oligonucleotide and its replacement by a new DNA fragment. The ATPase activity of XPB/ptr8, but not its helicase activity, is required for DNA opening. In transcription, TFIIH has an essential role in transcription initiation. When the pre-initiation complex (PIC) has been established, TFIIH is required for promoter opening and promoter escape. The ATP-dependent helicase activity of XPB/ptr8 is required for promoter escape but not for promoter opening. Plays a role in mRNA export. In Schizosaccharomyces pombe (strain 972 / ATCC 24843) (Fission yeast), this protein is General transcription and DNA repair factor IIH helicase/translocase subunit XPB.